A 254-amino-acid polypeptide reads, in one-letter code: Imidazole glycerol phosphate synthase subunit HisF (254 aa).

Active-site residues include Asp-13 and Asp-132.

Belongs to the HisA/HisF family. In terms of assembly, heterodimer of HisH and HisF.

It localises to the cytoplasm. It carries out the reaction 5-[(5-phospho-1-deoxy-D-ribulos-1-ylimino)methylamino]-1-(5-phospho-beta-D-ribosyl)imidazole-4-carboxamide + L-glutamine = D-erythro-1-(imidazol-4-yl)glycerol 3-phosphate + 5-amino-1-(5-phospho-beta-D-ribosyl)imidazole-4-carboxamide + L-glutamate + H(+). The protein operates within amino-acid biosynthesis; L-histidine biosynthesis; L-histidine from 5-phospho-alpha-D-ribose 1-diphosphate: step 5/9. Its function is as follows. IGPS catalyzes the conversion of PRFAR and glutamine to IGP, AICAR and glutamate. The HisF subunit catalyzes the cyclization activity that produces IGP and AICAR from PRFAR using the ammonia provided by the HisH subunit. The chain is Imidazole glycerol phosphate synthase subunit HisF from Sulfurovum sp. (strain NBC37-1).